A 562-amino-acid polypeptide reads, in one-letter code: Glutamyl-tRNA(Gln) amidotransferase subunit B, chloroplastic/mitochondrial (562 aa).

The interval 48 to 76 (SVASNSKREPRPVKTRVMTQERGSGETQT) is disordered. Positions 64–76 (VMTQERGSGETQT) are enriched in polar residues.

Belongs to the GatB/GatE family. GatB subfamily. Subunit of the heterotrimeric GatCAB amidotransferase (AdT) complex, composed of A, B and C subunits.

The protein localises to the mitochondrion. It localises to the plastid. Its subcellular location is the chloroplast. It catalyses the reaction L-glutamyl-tRNA(Gln) + L-glutamine + ATP + H2O = L-glutaminyl-tRNA(Gln) + L-glutamate + ADP + phosphate + H(+). Its function is as follows. Allows the formation of correctly charged Gln-tRNA(Gln) through the transamidation of misacylated Glu-tRNA(Gln) in chloroplasts and mitochondria. The reaction takes place in the presence of glutamine and ATP through an activated gamma-phospho-Glu-tRNA(Gln). This chain is Glutamyl-tRNA(Gln) amidotransferase subunit B, chloroplastic/mitochondrial, found in Physcomitrium patens (Spreading-leaved earth moss).